The chain runs to 198 residues: Putative pseudouridine methyltransferase (198 aa).

S-adenosyl-L-methionine is bound by residues leucine 132 and cysteine 186.

This sequence belongs to the methyltransferase superfamily. TrmY family.

The protein localises to the cytoplasm. This chain is Putative pseudouridine methyltransferase, found in Vibrio vulnificus (strain CMCP6).